The chain runs to 749 residues: MNGAEKSAAGDTYDPSTIPDYDREFIHPDDLRQFELALTDQGASPLVALNDWRPIYQRVRRERGRRKEPRRTKDETREGVLYTVLKWPFLFTVFGWITALAFAYTLTRVYIFLYEQWVTWRGRRQSLRRQLHAQTNYPDWQKAARALDDHLGNQRWKEIDEYAYYDHLTISNLVKQLKKVRREVERERREKRRGSGQSPAAEELCTLLEACVKNNFAGVENPRLYSEAYSGTKNLVQEYIDELHACIQLVADSKGITSEEKLQHFKHLDTNFGRTALCLSGGATFAYYHFGVVRALLDNGVLPEIITGTSGGALVAALVATRTDEELKQLLVPALAHRIRACQESFPTWVWRWWRTGARFDTLDWARQCSWFCRGSTTFREAYERTGRILNVSCVPSDPHSPTILANYLTSPNCVIWSAVLASAAVPGILNPVVLMTKKRDGTLAPYSFGHKWKDGSLRTDIPIKALNLHFNVNFTIVSQVNPHINLFFFSSRGTVGRPVTHRKGRGWRGGFLGSAIEQYIKLDMNKWLRVLRHLELLPRPMGQDWSEIWLQKFSGTVTIWPKTIPSDFYHILSDPNPERLARMLRVGQQSAFPKLQFIKNRLKIEIAVVKSLQKFAHAGGRPISPAPSRWRQNNDPDNHYNPSPRTDPLNERLDHNLPERRGDNVNITFGEGGGREDTHLLDGSLSENSSNESAARPSSSSSSSRLLRVPEHRRGSTGSSIFEEVRRQSAVFFDDVDMYGDDEALRPG.

Residues 1 to 21 are disordered; that stretch reads MNGAEKSAAGDTYDPSTIPDY. A helical transmembrane segment spans residues 87-107; that stretch reads WPFLFTVFGWITALAFAYTLT. In terms of domain architecture, PNPLA spans 277 to 468; the sequence is LCLSGGATFA…RTDIPIKALN (192 aa). Residues 308-312 carry the GXSXG motif; that stretch reads GTSGG. Ser310 acts as the Nucleophile in catalysis. Asp455 acts as the Proton acceptor in catalysis. The segment at 619-726 is disordered; it reads AGGRPISPAP…STGSSIFEEV (108 aa). The span at 649–664 shows a compositional bias: basic and acidic residues; it reads PLNERLDHNLPERRGD. The segment covering 685–707 has biased composition (low complexity); that stretch reads SLSENSSNESAARPSSSSSSSRL.

The protein belongs to the PLPL family.

The protein localises to the membrane. Its function is as follows. Probable lipid hydrolase. This chain is Patatin-like phospholipase domain-containing protein An01g04180, found in Aspergillus niger (strain ATCC MYA-4892 / CBS 513.88 / FGSC A1513).